Reading from the N-terminus, the 411-residue chain is LL-diaminopimelate aminotransferase (411 aa).

Substrate-binding residues include tyrosine 15 and glycine 42. Pyridoxal 5'-phosphate is bound by residues tyrosine 72, 108 to 109 (SK), tyrosine 132, asparagine 187, tyrosine 218, and 246 to 248 (SFS). The substrate site is built by lysine 109, tyrosine 132, and asparagine 187. An N6-(pyridoxal phosphate)lysine modification is found at lysine 249. Residues arginine 257 and asparagine 292 each coordinate pyridoxal 5'-phosphate. Asparagine 292 and arginine 388 together coordinate substrate.

This sequence belongs to the class-I pyridoxal-phosphate-dependent aminotransferase family. LL-diaminopimelate aminotransferase subfamily. As to quaternary structure, homodimer. Requires pyridoxal 5'-phosphate as cofactor.

It carries out the reaction (2S,6S)-2,6-diaminopimelate + 2-oxoglutarate = (S)-2,3,4,5-tetrahydrodipicolinate + L-glutamate + H2O + H(+). It participates in amino-acid biosynthesis; L-lysine biosynthesis via DAP pathway; LL-2,6-diaminopimelate from (S)-tetrahydrodipicolinate (aminotransferase route): step 1/1. In terms of biological role, involved in the synthesis of meso-diaminopimelate (m-DAP or DL-DAP), required for both lysine and peptidoglycan biosynthesis. Catalyzes the direct conversion of tetrahydrodipicolinate to LL-diaminopimelate. The protein is LL-diaminopimelate aminotransferase of Synechococcus sp. (strain JA-3-3Ab) (Cyanobacteria bacterium Yellowstone A-Prime).